Reading from the N-terminus, the 187-residue chain is Peptide deformylase (187 aa).

The Fe cation site is built by Cys96 and His138. The active site involves Glu139. His142 is a binding site for Fe cation.

Belongs to the polypeptide deformylase family. Fe(2+) is required as a cofactor.

It catalyses the reaction N-terminal N-formyl-L-methionyl-[peptide] + H2O = N-terminal L-methionyl-[peptide] + formate. Functionally, removes the formyl group from the N-terminal Met of newly synthesized proteins. Requires at least a dipeptide for an efficient rate of reaction. N-terminal L-methionine is a prerequisite for activity but the enzyme has broad specificity at other positions. The chain is Peptide deformylase from Brachyspira hyodysenteriae (strain ATCC 49526 / WA1).